The chain runs to 337 residues: Integrase/recombinase (337 aa).

Residues 14–94 (VKVLDQLRER…ALLFFYGKVL (81 aa)) form the Core-binding (CB) domain. One can recognise a Tyr recombinase domain in the interval 112–328 (RLPVVLTPDE…GGAGVRSPLD (217 aa)). Active-site residues include arginine 146, lysine 171, histidine 277, arginine 280, and histidine 303. The active-site O-(3'-phospho-DNA)-tyrosine intermediate is the tyrosine 312.

This sequence belongs to the 'phage' integrase family.

Functionally, putative integrase believed to be involved in the insertion of antibiotic resistance genes into plasmids and transposons. The protein is Integrase/recombinase (int) of Escherichia coli.